Consider the following 437-residue polypeptide: Peptidyl-prolyl cis-trans isomerase CYP38, chloroplastic (437 aa).

The N-terminal 36 residues, 1–36 (MAAAFASLPTFSVVNSSRFPRRRIGFSCSKKPLEVR), are a transit peptide targeting the chloroplast. The transit peptide at 37–92 (CSSGNTRYTKQRGAFTSLKECAISLALSVGLMVSVPSIALPPNAHAVANPVIPDVS) directs the protein to the thylakoid. The PPIase cyclophilin-type domain occupies 245–437 (VKIKDNPNIE…LANPSYKIAG (193 aa)).

As to expression, ubiquitous. Lower levels of expression in roots.

Its subcellular location is the plastid. The protein resides in the chloroplast thylakoid lumen. The enzyme catalyses [protein]-peptidylproline (omega=180) = [protein]-peptidylproline (omega=0). Functionally, required for the assembly and stabilization of PSII, but has no PPIases activity. This Arabidopsis thaliana (Mouse-ear cress) protein is Peptidyl-prolyl cis-trans isomerase CYP38, chloroplastic (CYP38).